The following is a 425-amino-acid chain: MPYATEETSSVAWFPEGNLCHSKTCGPRTNGIVLEAMKGKLSQPSEWDRSEPFCVMDLGYVYNEYQRWTSLLPDVKPFYAVKCNPDTHIIKVLNAMNSGFDCASRNEMELVMSQGVAPERIIFANPCKKISDLEYAQQSGVRKMTFDNEAELQKIRQRFPDAQLILRCLASDPSATYSLGSKFGASSATSVKLLQCAKSWGLSVVGVSFHIGSNAKDPTAFDKAIQNSREVFDAGLRTGHDMHLLDIGGGFSAHNFDAMASSIRQCIGKYFCGIDVEIVAEPGRYFAAGALTLACGIIGRRDAAANDEDKENRHMLYLNDGVYGTFICNIFEPGPQPKVLRASGDFYPLDSEDEYERYTIWGPTCDGTDCVAESVALPKSLAIDDWLYFPEMGAYSTCLSTGFNGFHSDRETIYMSSDPAADIYL.

Residue Lys-82 is modified to N6-(pyridoxal phosphate)lysine. Pyridoxal 5'-phosphate is bound by residues Ser-213, Gly-250, and 281 to 284 (EPGR). A substrate-binding site is contributed by 331–332 (FE). The active-site Proton donor; shared with dimeric partner is Cys-365. Substrate is bound at residue Asp-366. Tyr-395 lines the pyridoxal 5'-phosphate pocket.

The protein belongs to the Orn/Lys/Arg decarboxylase class-II family. Homodimer. Only the dimer is catalytically active, as the active sites are constructed of residues from both monomers. Pyridoxal 5'-phosphate serves as cofactor.

The protein localises to the cytoplasm. The enzyme catalyses N(6),N(6)-dimethyl-L-lysine + H(+) = N,N-dimethyl-cadaverine + CO2. It functions in the pathway secondary metabolite biosynthesis; terpenoid biosynthesis. Decarboxylase; part of the gene cluster that mediates the biosynthesis of flavunoidine, an alkaloidal terpenoid with a tetracyclic cage-like core connected to dimethylcadaverine via a C-N bond and acylated with 5,5-dimethyl-L-pipecolate. The tetracyclic core is synthesized by the terpene cyclase flvE and the cytochrome P450 monooxygenase flvD. The terpene cyclase flvE catalyzes the cyclization of farnesyl pyrophosphate (FPP) to form (1R,4R,5S)-(+)-acoradiene and the cytochrome P450 monooxygenase flvD is then responsible for oxidative conversion of (1R,4R,5S)-(+)-acoradiene into the tetracyclic cage present in the final product flavunoidine. In parallel, the N-methyltransferase flvH dimethylates L-lysine to give N,N-dimethyl-L-Lysin which is decarboxylated by flvG to afford dimethylcadaverine. The terpene cyclase-like protein flvF is the enzyme that attaches the dimethylcadaverine precusor at the C-7 of the tetracyclic cage to yield pre-flavunoidine. The cytochrome monooxygenase flvC hydroxylates the C-10 position of pre-flavunoidine whereas the NRPS flvI acylates the terpenoid core at the hydroxylated C-10 with dimethylpipecolate to yield final flavunoidine. The bifunctional enzyme flvA and the dehydrogenase flvB are responsible for the synthesis of the dimethylpipecolate precursor. The PLP-dependent lyase domain of flvA might use L-O-acetyl-homoserine and alpha-keto-isovalerate to form an intermediary ketone that can cyclize intramolecularly to yield an imine. The imine can be reduced by flvB to yield the 6-carboxylated pipecolate. The C-terminal alpha-KG-dependent oxygenase domain of flvA is then proposed to catalyze the decarboxylation to yield dimethylpipecolate. This Aspergillus flavus (strain ATCC 200026 / FGSC A1120 / IAM 13836 / NRRL 3357 / JCM 12722 / SRRC 167) protein is Decarboxylase flvG.